A 281-amino-acid polypeptide reads, in one-letter code: 3-mercaptopyruvate sulfurtransferase (281 aa).

Rhodanese domains lie at 17-135 (DDPE…LLEE) and 165-278 (HENT…LPVE). Residue R179 coordinates substrate. C238 (cysteine persulfide intermediate) is an active-site residue. A substrate specificity region spans residues 238-244 (CGSGVTA).

The protein localises to the cytoplasm. It catalyses the reaction 2-oxo-3-sulfanylpropanoate + [thioredoxin]-dithiol = [thioredoxin]-disulfide + hydrogen sulfide + pyruvate + H(+). Functionally, catalyzes the transfer of sulfur from 3-mercaptopyruvate to a thiol-containing acceptor to form an intramolecular disulfide releasing hydrogen sulfide and pyruvate. The sequence is that of 3-mercaptopyruvate sulfurtransferase (sseA) from Escherichia coli O157:H7.